A 21-amino-acid chain; its full sequence is Phospholipase A2 crotoxin basic chain (21 aa).

Belongs to the phospholipase A2 family. Group II subfamily. It depends on Ca(2+) as a cofactor. In terms of tissue distribution, expressed by the venom gland.

It is found in the secreted. The catalysed reaction is a 1,2-diacyl-sn-glycero-3-phosphocholine + H2O = a 1-acyl-sn-glycero-3-phosphocholine + a fatty acid + H(+). Its function is as follows. Snake venom phospholipase A2 (PLA2) that induces a conspicuous local myotoxic effect and moderate footpad edema. In vitro, it shows anticoagulant effects and is not cytotoxic on myoblast but is able to lyse myotubes. PLA2 catalyzes the calcium-dependent hydrolysis of the 2-acyl groups in 3-sn-phosphoglycerides. The sequence is that of Phospholipase A2 crotoxin basic chain from Crotalus durissus cumanensis (South American rattlesnake).